Consider the following 530-residue polypeptide: Negative elongation factor A (530 aa).

An HDAg domain is found at W89 to L248. Positions R125–Q188 are NELF-C/D-binding. At T157 the chain carries Phosphothreonine. The tract at residues L189–L248 is RNAPII-binding. Disordered stretches follow at residues P213–L248, G266–A296, and S312–T409. Residues S225 and S233 each carry the phosphoserine modification. The span at S225–R238 shows a compositional bias: polar residues. T277 carries the post-translational modification Phosphothreonine. Positions T277 to T291 are enriched in basic and acidic residues. Low complexity predominate over residues S315–S341. Position 363 is a phosphoserine (S363).

Belongs to the NELF-A family. In terms of assembly, the NELF complex is composed of NELFA, NELFB, NELFCD and NELFE; NELFA and NELFCD form a stable subcomplex that binds to the N-terminus of NELFB. In vitro, the NELFA:NELFCD subcomplex binds to ssDNA and ssRNA in a sequence- and structure-dependent manner. Interacts with the RNA polymerase II complex when it is not phosphorylated by P-TEFb. Interacts with NELFB. As to expression, ubiquitous. Expressed in brain, heart, spleen, lung, liver, muscle, kidney and testis. Already expressed in 7 dpc embryos.

The protein localises to the nucleus. Functionally, essential component of the NELF complex, a complex that negatively regulates the elongation of transcription by RNA polymerase II. The NELF complex, which acts via an association with the DSIF complex and causes transcriptional pausing, is counteracted by the P-TEFb kinase complex. The polypeptide is Negative elongation factor A (Nelfa) (Mus musculus (Mouse)).